The following is a 433-amino-acid chain: Ribulose bisphosphate carboxylase/oxygenase activase, chloroplastic (433 aa).

Over residues 1 to 20 (MAAAFSSTVGAPASTPTRSS) the composition is skewed to polar residues. The N-terminal 53 residues, 1–53 (MAAAFSSTVGAPASTPTRSSFLGKKLNKPQVSAAVTYHGKSSSSNSRFKAMAA), are a transit peptide targeting the chloroplast. A disordered region spans residues 1–60 (MAAAFSSTVGAPASTPTRSSFLGKKLNKPQVSAAVTYHGKSSSSNSRFKAMAAKEVDETK). 161 to 168 (GGKGQGKS) contacts ATP.

This sequence belongs to the RuBisCO activase family.

Its subcellular location is the plastid. It localises to the chloroplast stroma. Its function is as follows. Activation of RuBisCO (ribulose-1,5-bisphosphate carboxylase/oxygenase; EC 4.1.1.39) involves the ATP-dependent carboxylation of the epsilon-amino group of lysine leading to a carbamate structure. The polypeptide is Ribulose bisphosphate carboxylase/oxygenase activase, chloroplastic (RCA1) (Zea mays (Maize)).